We begin with the raw amino-acid sequence, 112 residues long: uncharacterized protein (112 aa).

The protein to U.parvum UU089.1.

This is an uncharacterized protein from Synechocystis sp. (strain ATCC 27184 / PCC 6803 / Kazusa).